A 729-amino-acid polypeptide reads, in one-letter code: Fatty acid oxidation complex subunit alpha (729 aa).

The tract at residues 1-189 is enoyl-CoA hydratase/isomerase; that stretch reads MLYKGDTLYL…KIGLVDGVVK (189 aa). Asp296 serves as a coordination point for substrate. The segment at 311-729 is 3-hydroxyacyl-CoA dehydrogenase; that stretch reads ETPKQAAVLG…ARPVGDLKTA (419 aa). Residues Met324, Asp343, 400–402, Lys407, and Ser429 contribute to the NAD(+) site; that span reads VVE. His450 serves as the catalytic For 3-hydroxyacyl-CoA dehydrogenase activity. Position 453 (Asn453) interacts with NAD(+). Positions 500 and 660 each coordinate substrate. Positions 708–729 are disordered; that stretch reads RHNEPYYPPVEPARPVGDLKTA.

The protein in the N-terminal section; belongs to the enoyl-CoA hydratase/isomerase family. In the C-terminal section; belongs to the 3-hydroxyacyl-CoA dehydrogenase family. Heterotetramer of two alpha chains (FadB) and two beta chains (FadA).

It catalyses the reaction a (3S)-3-hydroxyacyl-CoA + NAD(+) = a 3-oxoacyl-CoA + NADH + H(+). The enzyme catalyses a (3S)-3-hydroxyacyl-CoA = a (2E)-enoyl-CoA + H2O. It carries out the reaction a 4-saturated-(3S)-3-hydroxyacyl-CoA = a (3E)-enoyl-CoA + H2O. The catalysed reaction is (3S)-3-hydroxybutanoyl-CoA = (3R)-3-hydroxybutanoyl-CoA. It catalyses the reaction a (3Z)-enoyl-CoA = a 4-saturated (2E)-enoyl-CoA. The enzyme catalyses a (3E)-enoyl-CoA = a 4-saturated (2E)-enoyl-CoA. The protein operates within lipid metabolism; fatty acid beta-oxidation. Functionally, involved in the aerobic and anaerobic degradation of long-chain fatty acids via beta-oxidation cycle. Catalyzes the formation of 3-oxoacyl-CoA from enoyl-CoA via L-3-hydroxyacyl-CoA. It can also use D-3-hydroxyacyl-CoA and cis-3-enoyl-CoA as substrate. This chain is Fatty acid oxidation complex subunit alpha, found in Escherichia coli (strain UTI89 / UPEC).